Consider the following 501-residue polypeptide: MSKIVKRKEKKANDELTSLAEKIRAKALENQKKLIEAEKEGGSESDSEEDATAEKKKVLKSKSKSTVSTQNENTNEDESFESFSELNLVPELIQACKNLNYSKPTPIQSKAIPPALEGHDIIGLAQTGSGKTAAFAIPILNRLWHDQEPYYACILAPTRELAQQIKETFDSLGSLMGVRSTCIVGGMNMMDQARDLMRKPHIIIATPGRLMDHLENTKGFSLRKLKFLVMDEADRLLDMEFGPVLDRILKIIPTQERTTYLFSATMTSKIDKLQRASLTNPVKCAVSNKYQTVDTLVQTLMVVPGGLKNTYLIYLLNEFIGKTMIIFTRTKANAERLSGLCNLLEFSATALHGDLNQNQRMGALDLFKAGKRSILVATDVAARGLDIPSVDIVVNYDIPVDSKSYIHRVGRTARAGRSGKSISLVSQYDLELILRIEEVLGKKLPKESVDKNIILTLRDSVDKANGEVVMEMNRRNKEKIARGKGRRGRMMTRENMDMGER.

Residues 3–44 (KIVKRKEKKANDELTSLAEKIRAKALENQKKLIEAEKEGGSE) adopt a coiled-coil conformation. The segment at 36–79 (EAEKEGGSESDSEEDATAEKKKVLKSKSKSTVSTQNENTNEDES) is disordered. Residues Ser-43, Ser-45, and Ser-47 each carry the phosphoserine modification. Residues 81-109 (ESFSELNLVPELIQACKNLNYSKPTPIQS) carry the Q motif motif. Residues 112–284 (IPPALEGHDI…RASLTNPVKC (173 aa)) form the Helicase ATP-binding domain. 125–132 (AQTGSGKT) provides a ligand contact to ATP. The short motif at 231–234 (DEAD) is the DEAD box element. The Helicase C-terminal domain maps to 307–461 (LKNTYLIYLL…NIILTLRDSV (155 aa)). A disordered region spans residues 480-501 (IARGKGRRGRMMTRENMDMGER). Over residues 491 to 501 (MTRENMDMGER) the composition is skewed to basic and acidic residues.

This sequence belongs to the DEAD box helicase family. DDX47/RRP3 subfamily. As to quaternary structure, interacts with the SSU processome.

The protein localises to the nucleus. The catalysed reaction is ATP + H2O = ADP + phosphate + H(+). Functionally, ATP-dependent rRNA helicase required for pre-ribosomal RNA processing. Involved in the maturation of the 35S-pre-rRNA and to its cleavage to mature 18S rRNA. The sequence is that of ATP-dependent rRNA helicase RRP3 from Saccharomyces cerevisiae (strain YJM789) (Baker's yeast).